A 317-amino-acid polypeptide reads, in one-letter code: uncharacterized protein (317 aa).

This is an uncharacterized protein from Schizosaccharomyces pombe (strain 972 / ATCC 24843) (Fission yeast).